Reading from the N-terminus, the 301-residue chain is Formylmethanofuran--tetrahydromethanopterin formyltransferase (301 aa).

Belongs to the FTR family. In terms of assembly, homotetramer.

Its subcellular location is the cytoplasm. It carries out the reaction N-formylmethanofuran + 5,6,7,8-tetrahydromethanopterin + H(+) = N(5)-formyl-5,6,7,8-tetrahydromethanopterin + methanofuran. The protein operates within one-carbon metabolism; methanogenesis from CO(2); 5,10-methenyl-5,6,7,8-tetrahydromethanopterin from CO(2): step 2/3. Catalyzes the reversible transfer of a formyl group from formylmethanofuran (formyl-MFR) to tetrahydromethanopterin (H(4)MPT) to produce 5-formyl tetrahydromethanopterin (5-formyl-H(4)MPT) and methanofuran (MFR). In Methanocaldococcus jannaschii (strain ATCC 43067 / DSM 2661 / JAL-1 / JCM 10045 / NBRC 100440) (Methanococcus jannaschii), this protein is Formylmethanofuran--tetrahydromethanopterin formyltransferase.